An 89-amino-acid polypeptide reads, in one-letter code: uncharacterized protein (89 aa).

The 89-residue stretch at 1–89 (MEKYEKAAEI…KEIIKLVDEL (89 aa)) folds into the HTH arsR-type domain.

This is an uncharacterized protein from Methanocaldococcus jannaschii (strain ATCC 43067 / DSM 2661 / JAL-1 / JCM 10045 / NBRC 100440) (Methanococcus jannaschii).